The following is a 200-amino-acid chain: Histone H1 (200 aa).

Over residues 1–14 (MPPKKAPTTAKKAA) the composition is skewed to low complexity. Disordered regions lie at residues 1–20 (MPPK…PTHT) and 78–200 (DFIQ…NKKA). In terms of domain architecture, H15 spans 18–93 (THTSYRDMIK…GTSGPVKLAK (76 aa)). The span at 94–116 (KQAPAKPAPKKPATTTKTAAPKK) shows a compositional bias: low complexity. Basic and acidic residues predominate over residues 120-131 (KKADKAEKAEKP). Over residues 159 to 185 (TAAPAVVDKPKVVSVTKSGRKTTTTAK) the composition is skewed to low complexity.

This sequence belongs to the histone H1/H5 family.

The protein resides in the nucleus. Its subcellular location is the chromosome. Could act as an H1-type linker histone. The polypeptide is Histone H1 (hhoA) (Emericella nidulans (strain FGSC A4 / ATCC 38163 / CBS 112.46 / NRRL 194 / M139) (Aspergillus nidulans)).